The sequence spans 283 residues: S-methyl-5'-thioadenosine phosphorylase (283 aa).

Thr18 contributes to the phosphate binding site. Lys51 carries the post-translational modification N6-acetyllysine. Phosphate contacts are provided by residues 60–61 (RH) and 93–94 (TA). Met196 contributes to the substrate binding site. Thr197 contributes to the phosphate binding site. Residue 220–222 (DYD) participates in substrate binding.

It belongs to the PNP/MTAP phosphorylase family. MTAP subfamily. Homotrimer. In terms of tissue distribution, ubiquitously expressed.

It localises to the cytoplasm. Its subcellular location is the nucleus. The enzyme catalyses S-methyl-5'-thioadenosine + phosphate = 5-(methylsulfanyl)-alpha-D-ribose 1-phosphate + adenine. The protein operates within amino-acid biosynthesis; L-methionine biosynthesis via salvage pathway; S-methyl-5-thio-alpha-D-ribose 1-phosphate from S-methyl-5'-thioadenosine (phosphorylase route): step 1/1. With respect to regulation, inhibited by 5'-methylthiotubercin and 5'-chloroformycin. Catalyzes the reversible phosphorylation of S-methyl-5'-thioadenosine (MTA) to adenine and 5-methylthioribose-1-phosphate. Involved in the breakdown of MTA, a major by-product of polyamine biosynthesis. Responsible for the first step in the methionine salvage pathway after MTA has been generated from S-adenosylmethionine. Has broad substrate specificity with 6-aminopurine nucleosides as preferred substrates. The protein is S-methyl-5'-thioadenosine phosphorylase of Homo sapiens (Human).